A 270-amino-acid polypeptide reads, in one-letter code: 5'-AMP-activated protein kinase subunit beta-1 (270 aa).

The segment at 1-44 is disordered; the sequence is MGNTSSERAALERQAGHKTPRRDSSGGAKDGDRPKILMDSPEDA. Gly-2 carries N-myristoyl glycine lipidation. At Thr-4 the chain carries Phosphothreonine. Phosphoserine is present on residues Ser-5 and Ser-6. Basic and acidic residues predominate over residues 9–36; that stretch reads AALERQAGHKTPRRDSSGGAKDGDRPKI. A Phosphothreonine modification is found at Thr-19. A phosphoserine; by autocatalysis mark is found at Ser-24 and Ser-25. 3 positions are modified to phosphoserine: Ser-40, Ser-96, and Ser-101. Residues 68–163 form a glycogen-binding domain region; it reads EANDKAPAQA…QVKKTDFEVF (96 aa). Ser-108 is subject to Phosphoserine; by autocatalysis. Thr-148 bears the Phosphothreonine mark. The residue at position 182 (Ser-182) is a Phosphoserine. Lys-201 is modified (N6-succinyllysine).

It belongs to the 5'-AMP-activated protein kinase beta subunit family. In terms of assembly, AMPK is a heterotrimer of an alpha catalytic subunit (PRKAA1 or PRKAA2), a beta (PRKAB1 or PRKAB2) and a gamma non-catalytic subunits (PRKAG1, PRKAG2 or PRKAG3). Interacts with FNIP1 and FNIP2. Post-translationally, phosphorylated when associated with the catalytic subunit (PRKAA1 or PRKAA2). Phosphorylated by ULK1; leading to negatively regulate AMPK activity and suggesting the existence of a regulatory feedback loop between ULK1 and AMPK.

In terms of biological role, non-catalytic subunit of AMP-activated protein kinase (AMPK), an energy sensor protein kinase that plays a key role in regulating cellular energy metabolism. In response to reduction of intracellular ATP levels, AMPK activates energy-producing pathways and inhibits energy-consuming processes: inhibits protein, carbohydrate and lipid biosynthesis, as well as cell growth and proliferation. AMPK acts via direct phosphorylation of metabolic enzymes, and by longer-term effects via phosphorylation of transcription regulators. Also acts as a regulator of cellular polarity by remodeling the actin cytoskeleton; probably by indirectly activating myosin. Beta non-catalytic subunit acts as a scaffold on which the AMPK complex assembles, via its C-terminus that bridges alpha (PRKAA1 or PRKAA2) and gamma subunits (PRKAG1, PRKAG2 or PRKAG3). The chain is 5'-AMP-activated protein kinase subunit beta-1 (Prkab1) from Mus musculus (Mouse).